Reading from the N-terminus, the 474-residue chain is Bifunctional protein HldE (474 aa).

The tract at residues 1 to 318 is ribokinase; the sequence is MKLSMPRFDQ…RAVQREQGSE (318 aa). 194 to 197 provides a ligand contact to ATP; the sequence is NLSE. D263 is a catalytic residue. Residues 343 to 474 form a cytidylyltransferase region; it reads FTNGCFDILH…AIVEKIRQKG (132 aa).

The protein in the N-terminal section; belongs to the carbohydrate kinase PfkB family. It in the C-terminal section; belongs to the cytidylyltransferase family. As to quaternary structure, homodimer.

The catalysed reaction is D-glycero-beta-D-manno-heptose 7-phosphate + ATP = D-glycero-beta-D-manno-heptose 1,7-bisphosphate + ADP + H(+). The enzyme catalyses D-glycero-beta-D-manno-heptose 1-phosphate + ATP + H(+) = ADP-D-glycero-beta-D-manno-heptose + diphosphate. The protein operates within nucleotide-sugar biosynthesis; ADP-L-glycero-beta-D-manno-heptose biosynthesis; ADP-L-glycero-beta-D-manno-heptose from D-glycero-beta-D-manno-heptose 7-phosphate: step 1/4. Its pathway is nucleotide-sugar biosynthesis; ADP-L-glycero-beta-D-manno-heptose biosynthesis; ADP-L-glycero-beta-D-manno-heptose from D-glycero-beta-D-manno-heptose 7-phosphate: step 3/4. It participates in bacterial outer membrane biogenesis; LPS core biosynthesis. Catalyzes the phosphorylation of D-glycero-D-manno-heptose 7-phosphate at the C-1 position to selectively form D-glycero-beta-D-manno-heptose-1,7-bisphosphate. Its function is as follows. Catalyzes the ADP transfer from ATP to D-glycero-beta-D-manno-heptose 1-phosphate, yielding ADP-D-glycero-beta-D-manno-heptose. In Pseudomonas aeruginosa (strain ATCC 15692 / DSM 22644 / CIP 104116 / JCM 14847 / LMG 12228 / 1C / PRS 101 / PAO1), this protein is Bifunctional protein HldE.